The sequence spans 353 residues: Membrane lipoprotein TmpC (353 aa).

An N-terminal signal peptide occupies residues 1–20; that stretch reads MREKWVRAFAGVFCAMLLIG. Residue Cys21 is the site of N-palmitoyl cysteine attachment. A lipid anchor (S-diacylglycerol cysteine) is attached at Cys21. Asp47 serves as a coordination point for guanosine. Asp47 contributes to the inosine binding site. Adenosine contacts are provided by residues 47-48 and Phe56; that span reads DS. 6 residues coordinate guanosine: Asn57, Asp128, Phe206, Gly232, Asp258, and Lys280. Inosine-binding residues include Asn57 and Asp128. Adenosine is bound by residues Asp128, Phe206, Gly232, Asp258, and Lys280. Gly232, Asp258, and Lys280 together coordinate inosine.

This sequence belongs to the BMP lipoprotein family. In terms of assembly, monomer.

It is found in the cell membrane. Its function is as follows. Binds purine nucleosides and may play a role in purine nucleoside uptake. May be part of an ABC-type nucleoside uptake system. Has highest affinity for guanosine, followed by inosine and adenosine. Has very low affinity for cytidine and does not bind thymidine. This Treponema pallidum (strain Nichols) protein is Membrane lipoprotein TmpC (tmpC).